A 233-amino-acid polypeptide reads, in one-letter code: Ribose-5-phosphate isomerase A (233 aa).

Substrate contacts are provided by residues 28–31, 83–86, and 96–99; these read TGST, DGAD, and KGGG. Glutamate 105 acts as the Proton acceptor in catalysis. Lysine 123 contributes to the substrate binding site.

This sequence belongs to the ribose 5-phosphate isomerase family. As to quaternary structure, homodimer.

The enzyme catalyses aldehydo-D-ribose 5-phosphate = D-ribulose 5-phosphate. It participates in carbohydrate degradation; pentose phosphate pathway; D-ribose 5-phosphate from D-ribulose 5-phosphate (non-oxidative stage): step 1/1. Functionally, catalyzes the reversible conversion of ribose-5-phosphate to ribulose 5-phosphate. The polypeptide is Ribose-5-phosphate isomerase A (Rhizobium rhizogenes (strain K84 / ATCC BAA-868) (Agrobacterium radiobacter)).